The sequence spans 607 residues: Glycosyltransferase 25 family member (607 aa).

An N-terminal signal peptide occupies residues Met-1 to Gly-22. 4 N-linked (GlcNAc...) asparagine glycosylation sites follow: Asn-226, Asn-254, Asn-514, and Asn-565. Residues Asp-566–Leu-607 are disordered. Composition is skewed to basic and acidic residues over residues Ser-571–Leu-581 and Ile-591–Leu-607. Positions Lys-604–Leu-607 match the Prevents secretion from ER motif.

The protein belongs to the glycosyltransferase 25 family.

It is found in the endoplasmic reticulum lumen. The chain is Glycosyltransferase 25 family member from Aedes aegypti (Yellowfever mosquito).